The following is a 972-amino-acid chain: C-1-tetrahydrofolate synthase, mitochondrial (972 aa).

The N-terminal 55 residues, 1–55 (MNVMVSFNQLRNYFLESNSLRPSKWLFQSYGTSSSANILNGKLLARKLQRSVAEE), are a transit peptide targeting the mitochondrion. Residues 56-340 (VQALKAKDRN…DLNPLELKKP (285 aa)) are methylenetetrahydrofolate dehydrogenase and cyclohydrolase. Residues 84 to 88 (YVRMK) and 131 to 133 (VQL) each bind substrate. Residues 202 to 204 (GRS) and Ser227 each bind NADP(+). Residue 299-303 (PGGVG) participates in substrate binding. The segment at 341 to 972 (VPSDIEIANS…CENGEIVGLS (632 aa)) is formyltetrahydrofolate synthetase. 405 to 412 (TPFGEGKS) provides a ligand contact to ATP.

In the N-terminal section; belongs to the tetrahydrofolate dehydrogenase/cyclohydrolase family. It in the C-terminal section; belongs to the formate--tetrahydrofolate ligase family. As to quaternary structure, homodimer.

Its subcellular location is the mitochondrion. It catalyses the reaction (6R)-5,10-methylene-5,6,7,8-tetrahydrofolate + NADP(+) = (6R)-5,10-methenyltetrahydrofolate + NADPH. The catalysed reaction is (6R)-5,10-methenyltetrahydrofolate + H2O = (6R)-10-formyltetrahydrofolate + H(+). The enzyme catalyses (6S)-5,6,7,8-tetrahydrofolate + formate + ATP = (6R)-10-formyltetrahydrofolate + ADP + phosphate. The protein operates within one-carbon metabolism; tetrahydrofolate interconversion. Its function is as follows. Mitochondrial isozyme of C-1-tetrahydrofolate synthase. The trifunctional enzyme catalyzes the interconversion of the one-carbon derivatives of tetrahydrofolate (THF) between different oxidation states by the enzymatic activities 10-formyltetrahydrofolate synthetase, 5,lO-methenyltetrahydrofolate cyclohydrolase, and 5,lO-methylenetetrahydrofolate dehydrogenase. This is C-1-tetrahydrofolate synthase, mitochondrial (ade9) from Schizosaccharomyces pombe (strain 972 / ATCC 24843) (Fission yeast).